Here is a 282-residue protein sequence, read N- to C-terminus: RNA-4 uncharacterized 31.9 kDa protein (282 aa).

This Beta macrocarpa (Beet) protein is RNA-4 uncharacterized 31.9 kDa protein.